The sequence spans 418 residues: Galactooligosaccharides transport system permease protein GanP (418 aa).

The next 9 helical transmembrane spans lie at 25–45 (IKGI…GDLL), 65–85 (VFLL…LAVY), 129–149 (LFIL…LAFT), 191–211 (VVWT…LAII), 226–246 (ILIL…AGLF), 279–299 (LILM…TGVL), 323–343 (YITL…QFTF), 357–379 (GGPA…IYKL), and 388–408 (LAAA…LWQF). The ABC transmembrane type-1 domain occupies 187–407 (LAWTVVWTLA…VFVISIALWQ (221 aa)).

It belongs to the binding-protein-dependent transport system permease family. In terms of assembly, the complex is composed of two ATP-binding proteins (MsmX), two transmembrane proteins (GanP and GanQ) and a solute-binding protein (GanS).

The protein resides in the cell membrane. In terms of biological role, involved in galactan degradation. Part of the ABC transporter complex GanPQS involved in the uptake of galactooligosaccharides. Responsible for the translocation of the substrate across the membrane. This is Galactooligosaccharides transport system permease protein GanP (ganP) from Bacillus subtilis (strain 168).